The chain runs to 105 residues: Nucleoid-associated protein ABC0038 (105 aa).

A compositionally biased stretch (low complexity) spans 1-22 (MEMKNMGNMMKQMQKMQKQMMK). Residues 1–26 (MEMKNMGNMMKQMQKMQKQMMKAQEE) are disordered.

Belongs to the YbaB/EbfC family. As to quaternary structure, homodimer.

Its subcellular location is the cytoplasm. It is found in the nucleoid. In terms of biological role, binds to DNA and alters its conformation. May be involved in regulation of gene expression, nucleoid organization and DNA protection. This is Nucleoid-associated protein ABC0038 from Shouchella clausii (strain KSM-K16) (Alkalihalobacillus clausii).